Consider the following 89-residue polypeptide: Large ribosomal subunit protein bL31B (89 aa).

It belongs to the bacterial ribosomal protein bL31 family. Type B subfamily. As to quaternary structure, part of the 50S ribosomal subunit.

The sequence is that of Large ribosomal subunit protein bL31B from Pseudomonas fluorescens (strain ATCC BAA-477 / NRRL B-23932 / Pf-5).